The following is a 199-amino-acid chain: Dephospho-CoA kinase (199 aa).

Residues 3–199 form the DPCK domain; the sequence is TLGVTGGIGS…ELYWAVTGGQ (197 aa). 11–16 is a binding site for ATP; the sequence is GSGKTT.

Belongs to the CoaE family.

The protein localises to the cytoplasm. The catalysed reaction is 3'-dephospho-CoA + ATP = ADP + CoA + H(+). It participates in cofactor biosynthesis; coenzyme A biosynthesis; CoA from (R)-pantothenate: step 5/5. In terms of biological role, catalyzes the phosphorylation of the 3'-hydroxyl group of dephosphocoenzyme A to form coenzyme A. The sequence is that of Dephospho-CoA kinase from Salinibacter ruber (strain DSM 13855 / M31).